The primary structure comprises 273 residues: NADPH-dependent 7-cyano-7-deazaguanine reductase (273 aa).

81–83 (VES) serves as a coordination point for substrate. Residue 83–84 (SK) coordinates NADPH. The active-site Thioimide intermediate is the cysteine 179. Residue aspartate 186 is the Proton donor of the active site. 218-219 (AE) contacts substrate. 247-248 (RG) contributes to the NADPH binding site.

It belongs to the GTP cyclohydrolase I family. QueF type 2 subfamily. As to quaternary structure, homodimer.

Its subcellular location is the cytoplasm. It carries out the reaction 7-aminomethyl-7-carbaguanine + 2 NADP(+) = 7-cyano-7-deazaguanine + 2 NADPH + 3 H(+). The protein operates within tRNA modification; tRNA-queuosine biosynthesis. Functionally, catalyzes the NADPH-dependent reduction of 7-cyano-7-deazaguanine (preQ0) to 7-aminomethyl-7-deazaguanine (preQ1). The chain is NADPH-dependent 7-cyano-7-deazaguanine reductase from Rickettsia massiliae (strain Mtu5).